Consider the following 137-residue polypeptide: Small ribosomal subunit protein uS11 (137 aa).

Residues 116–137 (EDVTPIPHDGTRPKGGRRGRRV) form a disordered region.

It belongs to the universal ribosomal protein uS11 family. As to quaternary structure, part of the 30S ribosomal subunit.

Functionally, located on the platform of the 30S subunit. The chain is Small ribosomal subunit protein uS11 from Pyrococcus abyssi (strain GE5 / Orsay).